The primary structure comprises 1185 residues: ELMO domain-containing protein F (1185 aa).

Disordered regions lie at residues 88-133 (QPSP…GNNN), 176-196 (ISTN…NTAE), 361-409 (NNNS…VENE), 566-628 (KSTD…NTKS), 642-805 (ETER…KSSG), 819-868 (LGEK…PYII), 883-989 (DLDF…TQVT), and 1044-1114 (QKQK…KPVL). Low complexity-rich tracts occupy residues 94–127 (STIH…SSPI), 176–194 (ISTN…NNNT), 361–406 (NNNS…NNNV), and 587–613 (PQSQ…SSSS). Residues 275–488 (DRQNVLSFLN…KTRAVLSRIK (214 aa)) enclose the ELMO domain. Residues 648–665 (SLTGSNGITDGGDSNPNS) are compositionally biased toward polar residues. Over residues 688-699 (SENGSSSSFSFE) the composition is skewed to low complexity. The segment covering 721 to 732 (FNSLTGELTMNI) has biased composition (polar residues). Low complexity-rich tracts occupy residues 733-760 (SSSS…PNVS) and 767-780 (TTTT…TTTT). A compositionally biased stretch (polar residues) spans 781 to 790 (DDQSQQQVPP). Basic residues predominate over residues 829 to 841 (KVKSKKEKKKKSK). Low complexity-rich tracts occupy residues 853-864 (NNSANNSSYNNS), 912-974 (SSSN…QQPQ), 1053-1072 (DENQ…SSNE), and 1096-1109 (GRNS…SSLS).

The protein is ELMO domain-containing protein F (elmoF) of Dictyostelium discoideum (Social amoeba).